The primary structure comprises 139 residues: Cuticle protein 6 (139 aa).

Q1 is subject to Pyrrolidone carboxylic acid. Positions L31 to P92 constitute a Chitin-binding type R&amp;R domain.

This is Cuticle protein 6 from Blaberus craniifer (Death's head cockroach).